Here is a 526-residue protein sequence, read N- to C-terminus: GMP synthase [glutamine-hydrolyzing] (526 aa).

Positions 9–208 (RILILDFGSQ…VMDICGCETL (200 aa)) constitute a Glutamine amidotransferase type-1 domain. Catalysis depends on Cys-86, which acts as the Nucleophile. Residues His-182 and Glu-184 contribute to the active site. The 193-residue stretch at 209-401 (WTSSSIIEDA…LGLPYEMLYR (193 aa)) folds into the GMPS ATP-PPase domain. 236–242 (SGGVDSS) is a binding site for ATP.

Homodimer.

The catalysed reaction is XMP + L-glutamine + ATP + H2O = GMP + L-glutamate + AMP + diphosphate + 2 H(+). It functions in the pathway purine metabolism; GMP biosynthesis; GMP from XMP (L-Gln route): step 1/1. Its function is as follows. Catalyzes the synthesis of GMP from XMP. The protein is GMP synthase [glutamine-hydrolyzing] of Psychromonas ingrahamii (strain DSM 17664 / CCUG 51855 / 37).